The primary structure comprises 862 residues: Protein argonaute-2 (862 aa).

The PAZ domain maps to 232-351; sequence PVIEFMCEVL…LPLEVCNIVA (120 aa). 2 interaction with guide RNA regions span residues 314–319 and 527–569; these read YFKDRH and GKTP…LCLK. A Piwi domain is found at 520-821; the sequence is LVVVILPGKT…VAFRARYHLV (302 aa). Residues 590–593 are interaction with GW182 family members; the sequence is FQQP. Asp600 lines the a divalent metal cation pocket. Positions 653-663 are interaction with GW182 family members; sequence LIQFYKSTRFK. Asp672 contacts a divalent metal cation. Interaction with guide RNA stretches follow at residues 712–713, 756–764, and 793–815; these read KR, HAGIQGTSR, and YVRCTRSVSIPAPAYYAHLVAFR. Position 810 (His810) interacts with a divalent metal cation. Residues 825–847 are disordered; the sequence is HDSAEGSHTSGQSNGRDQQALAK. A compositionally biased stretch (polar residues) spans 830-841; it reads GSHTSGQSNGRD.

This sequence belongs to the argonaute family. Ago subfamily. Component of the RISC loading complex (RLC), or micro-RNA (miRNA) loading complex (miRLC), which is composed of dicer1, ago2 and tarbp2. Note that the trimeric RLC/miRLC is also referred to as RISC. Requires Mg(2+) as cofactor. The cofactor is Mn(2+).

The protein localises to the cytoplasm. It is found in the P-body. The enzyme catalyses Endonucleolytic cleavage to 5'-phosphomonoester.. Functionally, required for RNA-mediated gene silencing (RNAi) by the RNA-induced silencing complex (RISC). The 'minimal RISC' appears to include ago2 bound to a short guide RNA such as a microRNA (miRNA) or short interfering RNA (siRNA). These guide RNAs direct RISC to complementary mRNAs that are targets for RISC-mediated gene silencing. The precise mechanism of gene silencing depends on the degree of complementarity between the miRNA or siRNA and its target. Binding of RISC to a perfectly complementary mRNA generally results in silencing due to endonucleolytic cleavage of the mRNA specifically by ago2. Binding of RISC to a partially complementary mRNA results in silencing through inhibition of translation, and this is independent of endonuclease activity. The inhibition of translational initiation leads to the accumulation of the affected mRNA in cytoplasmic processing bodies (P-bodies), where mRNA degradation may subsequently occur. This chain is Protein argonaute-2 (ago2), found in Xenopus laevis (African clawed frog).